A 209-amino-acid chain; its full sequence is Thiamine-phosphate synthase (209 aa).

4-amino-2-methyl-5-(diphosphooxymethyl)pyrimidine contacts are provided by residues Gln38 to Lys42 and Asn70. Mg(2+)-binding residues include Asp71 and Asp90. 4-amino-2-methyl-5-(diphosphooxymethyl)pyrimidine is bound at residue Ser109. Thr135–Thr137 contacts 2-[(2R,5Z)-2-carboxy-4-methylthiazol-5(2H)-ylidene]ethyl phosphate. Residue Lys138 coordinates 4-amino-2-methyl-5-(diphosphooxymethyl)pyrimidine. 2-[(2R,5Z)-2-carboxy-4-methylthiazol-5(2H)-ylidene]ethyl phosphate contacts are provided by residues Gly165 and Val185–Ser186.

It belongs to the thiamine-phosphate synthase family. Mg(2+) serves as cofactor.

The enzyme catalyses 2-[(2R,5Z)-2-carboxy-4-methylthiazol-5(2H)-ylidene]ethyl phosphate + 4-amino-2-methyl-5-(diphosphooxymethyl)pyrimidine + 2 H(+) = thiamine phosphate + CO2 + diphosphate. It carries out the reaction 2-(2-carboxy-4-methylthiazol-5-yl)ethyl phosphate + 4-amino-2-methyl-5-(diphosphooxymethyl)pyrimidine + 2 H(+) = thiamine phosphate + CO2 + diphosphate. The catalysed reaction is 4-methyl-5-(2-phosphooxyethyl)-thiazole + 4-amino-2-methyl-5-(diphosphooxymethyl)pyrimidine + H(+) = thiamine phosphate + diphosphate. The protein operates within cofactor biosynthesis; thiamine diphosphate biosynthesis; thiamine phosphate from 4-amino-2-methyl-5-diphosphomethylpyrimidine and 4-methyl-5-(2-phosphoethyl)-thiazole: step 1/1. In terms of biological role, condenses 4-methyl-5-(beta-hydroxyethyl)thiazole monophosphate (THZ-P) and 2-methyl-4-amino-5-hydroxymethyl pyrimidine pyrophosphate (HMP-PP) to form thiamine monophosphate (TMP). The sequence is that of Thiamine-phosphate synthase from Persephonella marina (strain DSM 14350 / EX-H1).